The chain runs to 364 residues: MEPRVSVAEAVSSLTIADAFVGACEGPAPPRPALPSRFICSFPDCSASYNKAWKLDAHLCKHTGERPFVCDYEGCGKAFIRDYHLSRHVLIHTGEKPFVCADDGCNQKFNTKSNLKKHIERKHGNPQKQYVCSYEGCKKAFKKHQQLRTHQCQHTSEPLFRCTHEGCGKHFASPSRLKRHGKVHEGYLCQKGCSFMGKTWTELLKHMREAHKEDITCNVCQRMFKRRDYLKQHMKTHAPERDVYRCPRQGCGRTYTTVFNLQSHILSFHEEKRPFVCEHAGCGKTFAMKQSLMRHSVVHDPDKKRMKLKVRAPRERRSLASRLSGYFPPKRKQEPDYSLPNASAESSSSPEAQLPPPAALLTVC.

9 C2H2-type zinc fingers span residues 38–62, 68–92, 98–123, 130–154, 160–184, 187–211, 215–237, 244–269, and 275–299; these read FICS…LCKH, FVCD…VLIH, FVCA…ERKH, YVCS…QCQH, FRCT…GKVH, YLCQ…REAH, ITCN…MKTH, YRCP…LSFH, and FVCE…SVVH. The interval 299–364 is disordered; the sequence is HDPDKKRMKL…PPPAALLTVC (66 aa). Residues 338–352 are compositionally biased toward low complexity; sequence SLPNASAESSSSPEA.

It is found in the nucleus. Involved in ribosomal large subunit biogenesis. Binds the approximately 50 base pairs internal control region (ICR) of 5S ribosomal RNA genes. It is required for their RNA polymerase III-dependent transcription and may also maintain the transcription of other genes. Also binds the transcribed 5S RNA's. This is Transcription factor IIIA (Gtf3a) from Mus musculus (Mouse).